The sequence spans 364 residues: Thymidine kinase (364 aa).

36-43 (GPFGVGKT) contributes to the ATP binding site. Glu-64 serves as the catalytic Proton acceptor. Gln-108 contacts substrate. Residue Arg-201 coordinates ATP. Arg-207 contacts substrate.

It belongs to the herpesviridae thymidine kinase family. Homodimer.

The enzyme catalyses thymidine + ATP = dTMP + ADP + H(+). Catalyzes the transfer of the gamma-phospho group of ATP to thymidine to generate dTMP in the salvage pathway of pyrimidine synthesis. The dTMP serves as a substrate for DNA polymerase during viral DNA replication. Allows the virus to be reactivated and to grow in non-proliferative cells lacking a high concentration of phosphorylated nucleic acid precursors. This is Thymidine kinase from Infectious laryngotracheitis virus (strain Thorne V882) (ILTV).